A 164-amino-acid polypeptide reads, in one-letter code: UPF0304 protein PC1_2778 (164 aa).

Belongs to the UPF0304 family.

This Pectobacterium carotovorum subsp. carotovorum (strain PC1) protein is UPF0304 protein PC1_2778.